Here is a 1687-residue protein sequence, read N- to C-terminus: Helicase sen1 (1687 aa).

Residues 781–801 (VIKPSPTPQITVKQNTTKSSS) form a disordered region. Over residues 788 to 801 (PQITVKQNTTKSSS) the composition is skewed to polar residues. Residues Gln-1134, 1155 to 1159 (GTGKT), Gln-1407, Tyr-1445, and Glu-1574 contribute to the ATP site. The interval 1661 to 1687 (MKNEEFVEPPSKKLANSEPSKEIRQRS) is disordered.

It belongs to the DNA2/NAM7 helicase family. In terms of assembly, monomer.

The protein localises to the nucleus. Its function is as follows. ATP-dependent 5'-&gt;3' DNA/RNA helicase required for the expression and maturation of diverse classes of non-protein-coding RNAs like precursor tRNAs, rRNAs and small nuclear (snRNA) and nucleolar (snoRNA) RNAs. Directs RNA polymerase II transcription termination on snoRNAs as well as on several short protein-coding genes. May also play a role in transcription-coupled nucleotide excision repair. This is Helicase sen1 (sen1) from Schizosaccharomyces pombe (strain 972 / ATCC 24843) (Fission yeast).